The sequence spans 990 residues: Bacteriophage adsorption protein A (990 aa).

A signal peptide spans Met1–Ala27. TPR repeat units lie at residues Ile81–Asp114, Ala612–Asn645, and Ser646–Asp679.

(Microbial infection) Interacts with N4 phage non-contractile sheath protein; this interaction is essential for viral adsorption to the host.

The protein localises to the cell outer membrane. In terms of biological role, (Microbial infection) Allows N4 phage attachment by binding to the viral non-contractile sheath protein. The polypeptide is Bacteriophage adsorption protein A (nfrA) (Escherichia coli (strain K12)).